The sequence spans 139 residues: Small ribosomal subunit protein uS12 (139 aa).

This sequence belongs to the universal ribosomal protein uS12 family. In terms of assembly, part of the 30S ribosomal subunit. Contacts proteins S8 and S17. May interact with IF1 in the 30S initiation complex.

With S4 and S5 plays an important role in translational accuracy. Functionally, interacts with and stabilizes bases of the 16S rRNA that are involved in tRNA selection in the A site and with the mRNA backbone. Located at the interface of the 30S and 50S subunits, it traverses the body of the 30S subunit contacting proteins on the other side and probably holding the rRNA structure together. The combined cluster of proteins S8, S12 and S17 appears to hold together the shoulder and platform of the 30S subunit. The chain is Small ribosomal subunit protein uS12 from Mycoplasma pneumoniae (strain ATCC 29342 / M129 / Subtype 1) (Mycoplasmoides pneumoniae).